A 138-amino-acid chain; its full sequence is ATP synthase epsilon chain (138 aa).

Belongs to the ATPase epsilon chain family. As to quaternary structure, F-type ATPases have 2 components, CF(1) - the catalytic core - and CF(0) - the membrane proton channel. CF(1) has five subunits: alpha(3), beta(3), gamma(1), delta(1), epsilon(1). CF(0) has three main subunits: a, b and c.

It localises to the cell inner membrane. Produces ATP from ADP in the presence of a proton gradient across the membrane. This chain is ATP synthase epsilon chain, found in Cupriavidus pinatubonensis (strain JMP 134 / LMG 1197) (Cupriavidus necator (strain JMP 134)).